A 227-amino-acid chain; its full sequence is MSDELKHIAIVMDGNGRWAKKRGLPRSMGHKEGLNTVKRITKAVSDLGIPYITLYIFSTENWKRTEAEVGFLMGLIKQHLKAELKFYADNNIRIEHIGNLSGLPQDIQDEINSVRDKTSAYTGTAIVLGINYGAHDEILRAIKKLNSDELASINEESFSLKLDTGKIPPVDLLIRTGGEKRLSNFLLWQSAYAELYFTDTLWPDWTVENLYEAIEDYKKRNRRYGNA.

The active site involves aspartate 13. Residue aspartate 13 coordinates Mg(2+). Residues 14–17, tryptophan 18, arginine 26, histidine 30, and 58–60 contribute to the substrate site; these read GNGR and STE. The Proton acceptor role is filled by asparagine 61. Substrate is bound by residues tryptophan 62, arginine 64, arginine 175, and 181–183; that span reads RLS. Glutamate 194 contacts Mg(2+).

This sequence belongs to the UPP synthase family. Homodimer. Requires Mg(2+) as cofactor.

Catalyzes the condensation of isopentenyl diphosphate (IPP) with allylic pyrophosphates generating different type of terpenoids. The chain is Isoprenyl transferase from Treponema denticola (strain ATCC 35405 / DSM 14222 / CIP 103919 / JCM 8153 / KCTC 15104).